The sequence spans 192 residues: MRLIFLGPPGAGKGTQAKLLTERYGIPQLSTGDMLRTAVAQATEVGKRAKAVMDAGQLVSDEIVNEIVSDRIDSADCARGFILDGYPRTVPQAVALDRMLEEKGLKLDAVIELKVDEAALVRRMENRVTETVAAGGTVRSDDNPEAFRRRLQEYREKTAPLSEHYARTGRLKTVDGMADVHTVTAEIEKILA.

Residue 10–15 (GAGKGT) participates in ATP binding. The tract at residues 30–59 (STGDMLRTAVAQATEVGKRAKAVMDAGQLV) is NMP. AMP contacts are provided by residues Thr-31, Arg-36, 57 to 59 (QLV), 85 to 88 (GYPR), and Gln-92. An LID region spans residues 126-142 (NRVTETVAAGGTVRSDD). Arg-127 lines the ATP pocket. Positions 139 and 150 each coordinate AMP. Ala-178 contacts ATP.

It belongs to the adenylate kinase family. Monomer.

The protein localises to the cytoplasm. The catalysed reaction is AMP + ATP = 2 ADP. It functions in the pathway purine metabolism; AMP biosynthesis via salvage pathway; AMP from ADP: step 1/1. In terms of biological role, catalyzes the reversible transfer of the terminal phosphate group between ATP and AMP. Plays an important role in cellular energy homeostasis and in adenine nucleotide metabolism. The chain is Adenylate kinase from Rhizobium meliloti (strain 1021) (Ensifer meliloti).